We begin with the raw amino-acid sequence, 287 residues long: Protease HtpX (287 aa).

A run of 2 helical transmembrane segments spans residues 4–24 (IFLL…VMSI) and 33–53 (GGLL…SLAI). His-139 serves as a coordination point for Zn(2+). The active site involves Glu-140. Zn(2+) is bound at residue His-143. The next 2 membrane-spanning stretches (helical) occupy residues 154 to 174 (LIQG…AGII) and 195 to 215 (AVVF…VAYF). Residue Glu-220 participates in Zn(2+) binding.

It belongs to the peptidase M48B family. Requires Zn(2+) as cofactor.

It localises to the cell inner membrane. The protein is Protease HtpX of Shewanella sp. (strain ANA-3).